The chain runs to 79 residues: D-alanyl carrier protein (79 aa).

A Carrier domain is found at 1–77 (MDTKQGVLDI…KIVAKVESLE (77 aa)). Ser35 carries the O-(pantetheine 4'-phosphoryl)serine modification.

The protein belongs to the DltC family. In terms of processing, 4'-phosphopantetheine is transferred from CoA to a specific serine of apo-DCP.

It is found in the cytoplasm. It functions in the pathway cell wall biogenesis; lipoteichoic acid biosynthesis. Carrier protein involved in the D-alanylation of lipoteichoic acid (LTA). The loading of thioester-linked D-alanine onto DltC is catalyzed by D-alanine--D-alanyl carrier protein ligase DltA. The DltC-carried D-alanyl group is further transferred to cell membrane phosphatidylglycerol (PG) by forming an ester bond, probably catalyzed by DltD. D-alanylation of LTA plays an important role in modulating the properties of the cell wall in Gram-positive bacteria, influencing the net charge of the cell wall. This is D-alanyl carrier protein from Lactobacillus helveticus (strain DPC 4571).